The primary structure comprises 473 residues: Photosystem II CP43 reaction center protein (473 aa).

Residues 1–14 constitute a propeptide that is removed on maturation; the sequence is MKTLYSPRRFYPVE. Threonine 15 is subject to N-acetylthreonine. A Phosphothreonine modification is found at threonine 15. The next 5 membrane-spanning stretches (helical) occupy residues 69–93, 134–155, 178–200, 255–275, and 291–312; these read LFEV…PHLA, LLGP…KDRN, KALY…RKIS, KPFA…LSYS, and WFNN…ASQA. Residue glutamate 367 coordinates [CaMn4O5] cluster. The helical transmembrane segment at 447–471 threads the bilayer; that stretch reads RARAAAAGFEKGIDRDLEPVLFMTP.

Belongs to the PsbB/PsbC family. PsbC subfamily. As to quaternary structure, PSII is composed of 1 copy each of membrane proteins PsbA, PsbB, PsbC, PsbD, PsbE, PsbF, PsbH, PsbI, PsbJ, PsbK, PsbL, PsbM, PsbT, PsbX, PsbY, PsbZ, Psb30/Ycf12, at least 3 peripheral proteins of the oxygen-evolving complex and a large number of cofactors. It forms dimeric complexes. Binds multiple chlorophylls and provides some of the ligands for the Ca-4Mn-5O cluster of the oxygen-evolving complex. It may also provide a ligand for a Cl- that is required for oxygen evolution. PSII binds additional chlorophylls, carotenoids and specific lipids. serves as cofactor.

It is found in the plastid. It localises to the chloroplast thylakoid membrane. In terms of biological role, one of the components of the core complex of photosystem II (PSII). It binds chlorophyll and helps catalyze the primary light-induced photochemical processes of PSII. PSII is a light-driven water:plastoquinone oxidoreductase, using light energy to abstract electrons from H(2)O, generating O(2) and a proton gradient subsequently used for ATP formation. The sequence is that of Photosystem II CP43 reaction center protein from Ranunculus macranthus (Large buttercup).